The primary structure comprises 74 residues: U2-sicaritoxin-Sdo1a (74 aa).

The first 20 residues, 1 to 20 (MKLSFCFFLCAIVLFSFAEA), serve as a signal peptide directing secretion. Positions 21-39 (RINPNQLKRLRELVRDDEP) are excised as a propeptide. Cystine bridges form between Cys42-Cys59, Cys49-Cys62, and Cys58-Cys71.

In terms of tissue distribution, expressed by the venom gland.

Its subcellular location is the secreted. In Hexophthalma dolichocephala (Afrotropical spider), this protein is U2-sicaritoxin-Sdo1a.